Reading from the N-terminus, the 430-residue chain is Adenylosuccinate synthetase (430 aa).

Residues 12–18 (GDEGKGK) and 40–42 (GHT) contribute to the GTP site. Residue Asp13 is the Proton acceptor of the active site. Mg(2+) contacts are provided by Asp13 and Gly40. IMP is bound by residues 13 to 16 (DEGK), 38 to 41 (NAGH), Thr130, Arg144, Gln225, Thr240, and Arg304. His41 functions as the Proton donor in the catalytic mechanism. Position 300-306 (300-306 (STTGRPR)) interacts with substrate. Residues Arg306, 332–334 (KLD), and 414–416 (SVG) contribute to the GTP site.

Belongs to the adenylosuccinate synthetase family. Homodimer. It depends on Mg(2+) as a cofactor.

Its subcellular location is the cytoplasm. It catalyses the reaction IMP + L-aspartate + GTP = N(6)-(1,2-dicarboxyethyl)-AMP + GDP + phosphate + 2 H(+). The protein operates within purine metabolism; AMP biosynthesis via de novo pathway; AMP from IMP: step 1/2. Plays an important role in the de novo pathway of purine nucleotide biosynthesis. Catalyzes the first committed step in the biosynthesis of AMP from IMP. This Pelobacter propionicus (strain DSM 2379 / NBRC 103807 / OttBd1) protein is Adenylosuccinate synthetase.